A 334-amino-acid chain; its full sequence is L-lactate dehydrogenase B chain (334 aa).

Ala2 bears the N-acetylalanine mark. An N6-acetyllysine modification is found at Lys7. Residue Ser44 is modified to Phosphoserine. NAD(+)-binding positions include 53 to 58 (DVLEDK) and Arg100. The residue at position 58 (Lys58) is an N6-acetyllysine. Arg107 serves as a coordination point for substrate. Lys119 is modified (N6-acetyllysine). Asn139 contacts NAD(+). Positions 139 and 170 each coordinate substrate. The Proton acceptor role is filled by His194. Tyr240 bears the Phosphotyrosine mark. Thr249 lines the substrate pocket. An N6-acetyllysine modification is found at Lys329.

Belongs to the LDH/MDH superfamily. LDH family. In terms of assembly, homotetramer. Interacts with PTEN upstream reading frame protein MP31; the interaction leads to inhibition of mitochondrial lactate dehydrogenase activity, preventing conversion of lactate to pyruvate in mitochondria.

It is found in the cytoplasm. Its subcellular location is the mitochondrion inner membrane. It carries out the reaction (S)-lactate + NAD(+) = pyruvate + NADH + H(+). It participates in fermentation; pyruvate fermentation to lactate; (S)-lactate from pyruvate: step 1/1. In terms of biological role, interconverts simultaneously and stereospecifically pyruvate and lactate with concomitant interconversion of NADH and NAD(+). This is L-lactate dehydrogenase B chain (LDHB) from Bos taurus (Bovine).